Consider the following 403-residue polypeptide: Tripartite motif-containing protein 59 (403 aa).

The segment at 10 to 60 adopts an RING-type zinc-finger fold; that stretch reads CPICYSIFEDPRVLPCSHTFCRNCLENILQASGNFYIWRPLRIPLKCPNCR. The B box-type zinc-finger motif lies at 92–134; it reads PDIVTCPEHYRQPLNVYCLLDKKLVCGHCLTIGQHHGHPIDDL. 4 residues coordinate Zn(2+): Cys97, His100, Cys120, and His126. Residues 163-246 adopt a coiled-coil conformation; it reads LIEKLKEQKS…ALTISLQEES (84 aa). The helical transmembrane segment at 329–349 threads the bilayer; that stretch reads ILNIVVVTLISVILMSILFFN.

This sequence belongs to the TRIM/RBCC family. In terms of assembly, interacts with ECSIT.

The protein localises to the endoplasmic reticulum membrane. It carries out the reaction S-ubiquitinyl-[E2 ubiquitin-conjugating enzyme]-L-cysteine + [acceptor protein]-L-lysine = [E2 ubiquitin-conjugating enzyme]-L-cysteine + N(6)-ubiquitinyl-[acceptor protein]-L-lysine.. The protein operates within protein modification; protein ubiquitination. In terms of biological role, E3 ubiquitin ligase involved in different processes such as development and immune response. Serves as a negative regulator for innate immune signaling pathways by suppressing RLR-induced activation of IRF3/7 and NF-kappa-B via interaction with adapter ECSIT. Regulates autophagy through modulating both the transcription and the ubiquitination of BECN1. On the one hand, regulates the transcription of BECN1 through negatively modulating the NF-kappa-B pathway. On the other hand, regulates TRAF6-mediated 'Lys-63'-linked ubiquitination of BECN1, thus affecting the formation of the BECN1-PIK3C3 complex. In addition, mediates 'Lys-48'-linked ubiquitination of TRAF6 and thereby promotes TRAF6 proteasomal degradation. Also acts as a critical regulator for early embryo development from blastocyst stage to gastrula through modulating F-actin assembly and WASH1 'Lys-63'-linked ubiquitination. This chain is Tripartite motif-containing protein 59 (TRIM59), found in Homo sapiens (Human).